A 171-amino-acid chain; its full sequence is Disulfide bond formation protein B (171 aa).

The Cytoplasmic segment spans residues 1–13 (MTFISNLADTRLA). Residues 14–30 (WGLLFLSALVLVAYALF) form a helical membrane-spanning segment. Topologically, residues 31-48 (SQHAMGLQPCIMCIYQRT) are periplasmic. A disulfide bridge connects residues Cys-40 and Cys-43. A helical transmembrane segment spans residues 49–63 (AIFGIMFACVPVLAA). At 64 to 70 (NNMLTRL) the chain is on the cytoplasmic side. Residues 71–88 (FAFTVWGISAIWGGLIAW) form a helical membrane-spanning segment. Residues 89–144 (EHYDIQNAANPFFATCEIVPNFPSWLPLHEWLPNLFAATGDCGNIDWVFMDMSMPQ) are Periplasmic-facing. A disulfide bridge connects residues Cys-104 and Cys-130. The chain crosses the membrane as a helical span at residues 145-163 (WMMVVFAIYSSIWFVVLAS). The Cytoplasmic segment spans residues 164-171 (RLIGNRAI).

Belongs to the DsbB family.

It is found in the cell inner membrane. Its function is as follows. Required for disulfide bond formation in some periplasmic proteins. Acts by oxidizing the DsbA protein. This Pseudoalteromonas atlantica (strain T6c / ATCC BAA-1087) protein is Disulfide bond formation protein B.